A 162-amino-acid polypeptide reads, in one-letter code: Interleukin-15 (162 aa).

Residues 1 to 29 form the signal peptide; it reads MRISKPHLRSVSIQCYLCLLLNSHFLTEA. A propeptide spanning residues 30–48 is cleaved from the precursor; sequence GIHVFILGCFSAGLPKTEA. Intrachain disulfides connect Cys83–Cys133 and Cys90–Cys136. Residue Asn127 is glycosylated (N-linked (GlcNAc...) asparagine).

This sequence belongs to the IL-15/IL-21 family.

It localises to the secreted. Cytokine that plays a major role in the development of inflammatory and protective immune responses to microbial invaders and parasites by modulating immune cells of both the innate and adaptive immune systems. Stimulates the proliferation of natural killer cells, T-cells and B-cells and promotes the secretion of several cytokines. In monocytes, induces the production of IL8 and monocyte chemotactic protein 1/CCL2, two chemokines that attract neutrophils and monocytes respectively to sites of infection. Unlike most cytokines, which are secreted in soluble form, IL15 is expressed in association with its high affinity IL15RA on the surface of IL15-producing cells and delivers signals to target cells that express IL2RB and IL2RG receptor subunits. Binding to its receptor triggers the phosphorylation of JAK1 and JAK3 and the recruitment and subsequent phosphorylation of signal transducer and activator of transcription-3/STAT3 and STAT5. In mast cells, induces the rapid tyrosine phosphorylation of STAT6 and thereby controls mast cell survival and release of cytokines such as IL4. The polypeptide is Interleukin-15 (IL15) (Macaca mulatta (Rhesus macaque)).